The primary structure comprises 404 residues: MSKVTKVVLAYSGGLDTSAIIPWLKENYDCEVVAFVADVGQGAAELEGIEEKAIASGASSCYIADLKEEMVADYIYPSLKTGAIYEGKYLLGTSMARPIIAKAQVECALAVGADAVCHGCTGKGNDQVRFEGAYAALAPQLTVIAPWREWDLRSREALLDYLAERDIPCTASLEKIYSRDANAWHISTEGGVLENTWNQSNELCWVWTKDPENAPEKAETVSILVEKGEVVAVDGEAMSPFNALTYLNEKGAEHGVGRIDIVENRLVGIKSRGCYETPGGTIMNEALRAVEQLVLDKESYEFRETVGLKASHLIYDGRWFTPLCKSILAAADELAQDVSGEVVVKLYKGQATVIQKRSMNSLYSEEFATFGEDDVYDHSHAGGFIRLYSLASRIRALNTQKKQK.

Residues 10 to 18 (AYSGGLDTS) and Ala37 contribute to the ATP site. L-citrulline contacts are provided by Tyr89 and Ser94. Gly119 contributes to the ATP binding site. Thr121, Asn125, and Asp126 together coordinate L-aspartate. Asn125 is an L-citrulline binding site. The L-citrulline site is built by Arg129, Ser178, Ser187, Glu263, and Tyr275.

It belongs to the argininosuccinate synthase family. Type 1 subfamily. As to quaternary structure, homotetramer.

The protein localises to the cytoplasm. The enzyme catalyses L-citrulline + L-aspartate + ATP = 2-(N(omega)-L-arginino)succinate + AMP + diphosphate + H(+). It functions in the pathway amino-acid biosynthesis; L-arginine biosynthesis; L-arginine from L-ornithine and carbamoyl phosphate: step 2/3. The protein is Argininosuccinate synthase of Photobacterium profundum (strain SS9).